We begin with the raw amino-acid sequence, 177 residues long: Adenine phosphoribosyltransferase (177 aa).

Belongs to the purine/pyrimidine phosphoribosyltransferase family. In terms of assembly, homodimer.

The protein localises to the cytoplasm. The enzyme catalyses AMP + diphosphate = 5-phospho-alpha-D-ribose 1-diphosphate + adenine. It functions in the pathway purine metabolism; AMP biosynthesis via salvage pathway; AMP from adenine: step 1/1. In terms of biological role, catalyzes a salvage reaction resulting in the formation of AMP, that is energically less costly than de novo synthesis. The protein is Adenine phosphoribosyltransferase of Leptospira biflexa serovar Patoc (strain Patoc 1 / Ames).